The primary structure comprises 264 residues: Small ribosomal subunit protein uS2 (264 aa).

The protein belongs to the universal ribosomal protein uS2 family.

In Helicobacter pylori (strain Shi470), this protein is Small ribosomal subunit protein uS2.